Here is a 153-residue protein sequence, read N- to C-terminus: Calmodulin-like protein 4 (153 aa).

4 EF-hand domains span residues 8-43 (DQIN…LGAS), 44-79 (PTPG…QIKQ), 81-116 (DPKK…LGEK), and 117-152 (LTHK…PVRD).

Belongs to the calmodulin family. In terms of assembly, interacts with MYO7B; the interaction mediates the association of CALML4 with the IMAC/intermicrovillar adhesion complex. Interacts with MYO7A. Expressed in the small intestine, in both mature enterocytes on the villus surface and immature cells that reside in the crypt stem-cell niche.

It localises to the cell projection. It is found in the microvillus. As part of the intermicrovillar adhesion complex/IMAC plays a role in epithelial brush border differentiation, controlling microvilli organization and length. Acts as a light chain for MYO7B and is required for efficient targeting of the IMAC to the tips of border brush microvilli. The polypeptide is Calmodulin-like protein 4 (Calml4) (Mus musculus (Mouse)).